A 125-amino-acid polypeptide reads, in one-letter code: Large ribosomal subunit protein bL12 (125 aa).

This sequence belongs to the bacterial ribosomal protein bL12 family. As to quaternary structure, homodimer. Part of the ribosomal stalk of the 50S ribosomal subunit. Forms a multimeric L10(L12)X complex, where L10 forms an elongated spine to which 2 to 4 L12 dimers bind in a sequential fashion. Binds GTP-bound translation factors.

Its function is as follows. Forms part of the ribosomal stalk which helps the ribosome interact with GTP-bound translation factors. Is thus essential for accurate translation. The protein is Large ribosomal subunit protein bL12 of Polaromonas sp. (strain JS666 / ATCC BAA-500).